The sequence spans 188 residues: HTH-type transcriptional repressor AcnR (188 aa).

The HTH tetR-type domain occupies 10 to 70 (TNSRQEILEG…ALAREDAARM (61 aa)). The H-T-H motif DNA-binding region spans 33 to 52 (TVRRLEEATGKSRGAIFHHF). Citrate is bound by residues 79 to 80 (LV), arginine 130, and asparagine 134. Mg(2+) is bound at residue glutamate 181. Arginine 185 contacts citrate.

As to quaternary structure, homodimer.

AcnR negatively controls the expression of the aconitase gene acn. Binds to the imperfect inverted repeat in the acn promoter region. This is HTH-type transcriptional repressor AcnR from Corynebacterium glutamicum (strain ATCC 13032 / DSM 20300 / JCM 1318 / BCRC 11384 / CCUG 27702 / LMG 3730 / NBRC 12168 / NCIMB 10025 / NRRL B-2784 / 534).